The primary structure comprises 109 residues: Ubiquitin-related modifier 1 homolog (109 aa).

A 1-thioglycine modification is found at glycine 109. Glycine 109 participates in a covalent cross-link: Glycyl lysine isopeptide (Gly-Lys) (interchain with K-? in acceptor proteins).

The protein belongs to the URM1 family. In terms of processing, C-terminal thiocarboxylation occurs in 2 steps, it is first acyl-adenylated (-COAMP) via the hesA/moeB/thiF part of the MOCS3 homolog, then thiocarboxylated (-COSH) via the rhodanese domain of the MOCS3 homolog.

The protein resides in the cytoplasm. The protein operates within tRNA modification; 5-methoxycarbonylmethyl-2-thiouridine-tRNA biosynthesis. Functionally, acts as a sulfur carrier required for 2-thiolation of mcm(5)S(2)U at tRNA wobble positions of cytosolic tRNA(Lys), tRNA(Glu) and tRNA(Gln). Serves as sulfur donor in tRNA 2-thiolation reaction by being thiocarboxylated (-COSH) at its C-terminus by MOCS3. The sulfur is then transferred to tRNA to form 2-thiolation of mcm(5)S(2)U. Also acts as a ubiquitin-like protein (UBL) that is covalently conjugated via an isopeptide bond to lysine residues of target proteins. The thiocarboxylated form serves as substrate for conjugation and oxidative stress specifically induces the formation of UBL-protein conjugates. The protein is Ubiquitin-related modifier 1 homolog of Culex quinquefasciatus (Southern house mosquito).